The chain runs to 736 residues: DNA topoisomerase 1 (736 aa).

The Toprim domain maps to 2 to 113 (KHLIIVESPA…SYPRIVFHEI (112 aa)). The Mg(2+) site is built by glutamate 8 and aspartate 82. The 424-residue stretch at 129–552 (DMFKVNAQQA…DFYYPFMDKI (424 aa)) folds into the Topo IA-type catalytic domain. Positions 163-168 (SAGRVQ) are interaction with DNA. The O-(5'-phospho-DNA)-tyrosine intermediate role is filled by tyrosine 297. 4 C4-type zinc fingers span residues 572 to 598 (CPKC…YPKC), 616 to 642 (CEKC…YPEC), 663 to 689 (CPEC…YPKC), and 702 to 725 (CEKC…CIQC).

The protein belongs to the type IA topoisomerase family. Monomer. Requires Mg(2+) as cofactor.

The enzyme catalyses ATP-independent breakage of single-stranded DNA, followed by passage and rejoining.. Releases the supercoiling and torsional tension of DNA, which is introduced during the DNA replication and transcription, by transiently cleaving and rejoining one strand of the DNA duplex. Introduces a single-strand break via transesterification at a target site in duplex DNA. The scissile phosphodiester is attacked by the catalytic tyrosine of the enzyme, resulting in the formation of a DNA-(5'-phosphotyrosyl)-enzyme intermediate and the expulsion of a 3'-OH DNA strand. The free DNA strand then undergoes passage around the unbroken strand, thus removing DNA supercoils. Finally, in the religation step, the DNA 3'-OH attacks the covalent intermediate to expel the active-site tyrosine and restore the DNA phosphodiester backbone. The polypeptide is DNA topoisomerase 1 (Helicobacter pylori (strain J99 / ATCC 700824) (Campylobacter pylori J99)).